The sequence spans 157 residues: Heat shock protein beta-9 (157 aa).

Positions Met-1–Gln-17 are enriched in low complexity. 2 disordered regions span residues Met-1 to Ser-20 and Pro-136 to Ala-157. The region spanning Gln-35 to Phe-148 is the sHSP domain. Residues Phe-148–Ala-157 are compositionally biased toward basic residues.

This sequence belongs to the small heat shock protein (HSP20) family.

The protein resides in the cytoplasm. The protein localises to the nucleus. The polypeptide is Heat shock protein beta-9 (HSPB9) (Bos taurus (Bovine)).